Here is a 91-residue protein sequence, read N- to C-terminus: Small ribosomal subunit protein bS6 (91 aa).

It belongs to the bacterial ribosomal protein bS6 family.

Its function is as follows. Binds together with bS18 to 16S ribosomal RNA. This Leptospira biflexa serovar Patoc (strain Patoc 1 / Ames) protein is Small ribosomal subunit protein bS6.